A 308-amino-acid chain; its full sequence is tRNA dimethylallyltransferase (308 aa).

11–18 (GPTGIGKT) is an ATP binding site. Residue 13-18 (TGIGKT) participates in substrate binding. The tract at residues 36-39 (DSMQ) is interaction with substrate tRNA.

This sequence belongs to the IPP transferase family. Monomer. The cofactor is Mg(2+).

The enzyme catalyses adenosine(37) in tRNA + dimethylallyl diphosphate = N(6)-dimethylallyladenosine(37) in tRNA + diphosphate. In terms of biological role, catalyzes the transfer of a dimethylallyl group onto the adenine at position 37 in tRNAs that read codons beginning with uridine, leading to the formation of N6-(dimethylallyl)adenosine (i(6)A). This is tRNA dimethylallyltransferase from Lactobacillus gasseri (strain ATCC 33323 / DSM 20243 / BCRC 14619 / CIP 102991 / JCM 1131 / KCTC 3163 / NCIMB 11718 / NCTC 13722 / AM63).